A 462-amino-acid polypeptide reads, in one-letter code: B3 domain-containing protein REM8 (462 aa).

3 DNA-binding regions (TF-B3) span residues 11 to 103 (NKHF…LGPS), 148 to 243 (CFSQ…LCSR), and 249 to 346 (FVKL…FSKI). Residues 351–419 (FEAEDRRHKR…NLQKTQACSV (69 aa)) form a disordered region. A compositionally biased stretch (basic and acidic residues) spans 369–397 (ETDKGEPSRATKMGPELEKREKTAEKGEP). Over residues 399-418 (RASNKSSGKQGNLQKTQACS) the composition is skewed to polar residues.

It is found in the nucleus. In Arabidopsis thaliana (Mouse-ear cress), this protein is B3 domain-containing protein REM8 (REM8).